Reading from the N-terminus, the 395-residue chain is Calsequestrin-1 (395 aa).

An N-terminal signal peptide occupies residues 1-28 (MNAADRMGARVALLLLLVLGSPQSGVHG). Tyr-37 is subject to Phosphotyrosine. Ser-75 carries the post-translational modification Phosphoserine. Position 118 is a phosphothreonine (Thr-118). Ser-210 bears the Phosphoserine mark. N-linked (GlcNAc...) asparagine glycosylation is present at Asn-344. The interval 376-395 (EGEINTEDDDDEDDDDDDDD) is disordered.

Belongs to the calsequestrin family. In terms of assembly, monomer; increases in response to a depletion of intracellular calcium. Homodimer. Homotetramer and homopolymer. Can form linear homooligomers. Ca(2+) ions promote oligomerization. Interacts (via C-terminal end and preferentially with the monomeric form) with STIM1; this interaction increases in response to a depletion of intracellular calcium, decreases both STIM1 aggregation and clustering, interaction of STIM1 with ORAI1 and store-operated Ca(2+) entry (SOCE) activity. Interacts with ASPH and TRDN. In terms of processing, N-glycosylated. As to expression, detected in skeletal muscle (at protein level). Detected in skeletal muscle.

Its subcellular location is the endoplasmic reticulum. The protein resides in the sarcoplasmic reticulum. It localises to the sarcoplasmic reticulum lumen. The protein localises to the mitochondrion matrix. It is found in the sarcoplasmic reticulum membrane. Functionally, calsequestrin is a high-capacity, moderate affinity, calcium-binding protein and thus acts as an internal calcium store in muscle. Calcium ions are bound by clusters of acidic residues at the protein surface, often at the interface between subunits. Can bind around 80 Ca(2+) ions. Regulates the release of lumenal Ca(2+) via the calcium release channel RYR1; this plays an important role in triggering muscle contraction. Negatively regulates store-operated Ca(2+) entry (SOCE) activity. The chain is Calsequestrin-1 (CASQ1) from Oryctolagus cuniculus (Rabbit).